We begin with the raw amino-acid sequence, 579 residues long: MASSSTSISLLLFVSFILLLVNSRAENASSGSDLDEELAFLAAEESKEQSHGGGSYHEEEHDHQHRDFENYDDLEQGGGEFHHGDHGYEEEPLPPVDEKDVAVLTKDNFTEFVGNNSFAMVEFYAPWCGACQALTPEYAAAATELKGLAALAKIDATEEGDLAQKYEIQGFPTVFLFVDGEMRKTYEGERTKDGIVTWLKKKASPSIHNITTKEEAERVLSAEPKLVFGFLNSLVGSESEELAAASRLEDDLSFYQTASPDIAKLFEIETQVKRPALVLLKKEEEKLARFDGNFTKTAIAEFVSANKVPLVINFTREGASLIFESSVKNQLILFAKANESEKHLPTLREVAKSFKGKFVFVYVQMDNEDYGEAVSGFFGVTGAAPKVLVYTGNEDMRKFILDGELTVNNIKTLAEDFLADKLKPFYKSDPLPENNDGDVKVIVGNNFDEIVLDESKDVLLEIYAPWCGHCQSFEPIYNKLGKYLKGIDSLVVAKMDGTSNEHPRAKADGFPTILFFPGGNKSFDPIAVDVDRTVVELYKFLKKHASIPFKLEKPATPEPVISTMKSDEKIEGDSSKDEL.

An N-terminal signal peptide occupies residues 1–25; sequence MASSSTSISLLLFVSFILLLVNSRA. A glycan (N-linked (GlcNAc...) asparagine) is linked at Asn-27. Composition is skewed to basic and acidic residues over residues 44–69 and 80–89; these read EESK…RDFE and EFHHGDHGYE. A disordered region spans residues 44–91; the sequence is EESKEQSHGGGSYHEEEHDHQHRDFENYDDLEQGGGEFHHGDHGYEEE. A Thioredoxin 1 domain is found at 81 to 204; that stretch reads FHHGDHGYEE…IVTWLKKKAS (124 aa). N-linked (GlcNAc...) asparagine glycosylation is found at Asn-108 and Asn-115. Catalysis depends on nucleophile residues Cys-128 and Cys-131. Cys-128 and Cys-131 are joined by a disulfide. N-linked (GlcNAc...) asparagine glycosylation is found at Asn-209, Asn-293, Asn-313, and Asn-338. Residues 416 to 546 form the Thioredoxin 2 domain; that stretch reads DFLADKLKPF…LYKFLKKHAS (131 aa). Catalysis depends on nucleophile residues Cys-467 and Cys-470. The cysteines at positions 467 and 470 are disulfide-linked. N-linked (GlcNAc...) asparagine glycosylation occurs at Asn-520. Residues 558 to 579 are disordered; it reads EPVISTMKSDEKIEGDSSKDEL. Positions 565-579 are enriched in basic and acidic residues; it reads KSDEKIEGDSSKDEL. Positions 576–579 match the Prevents secretion from ER motif; it reads KDEL.

It belongs to the protein disulfide isomerase family. Widely expressed.

Its subcellular location is the endoplasmic reticulum lumen. It carries out the reaction Catalyzes the rearrangement of -S-S- bonds in proteins.. Functionally, acts as a protein-folding catalyst that interacts with nascent polypeptides to catalyze the formation, isomerization, and reduction or oxidation of disulfide bonds. This is Protein disulfide isomerase-like 1-3 (PDIL1-3) from Arabidopsis thaliana (Mouse-ear cress).